We begin with the raw amino-acid sequence, 2357 residues long: Protein transport protein Sec16A (2357 aa).

Disordered stretches follow at residues 1–225 (MQPP…SYQH), 240–347 (QAAS…AHHP), 394–463 (SFSS…GTGT), 504–562 (YGPL…ARPQ), 579–630 (DTSG…TSAN), 666–689 (KRRA…DNME), 714–739 (TAGT…GPVK), 778–820 (SEVV…PPKV), 917–1008 (VTGA…QEEA), 1023–1055 (PVRM…LHNQ), and 1076–1151 (QPEL…AAVR). 2 stretches are compositionally biased toward polar residues: residues 57 to 75 (NRQT…SSLP) and 94 to 104 (TPTNAGDSSTG). The span at 208-221 (MPGQWGPAQGGPQP) shows a compositional bias: low complexity. Residues 281–290 (VHQQSKNHPL) show a composition bias toward polar residues. Phosphoserine is present on S311. The span at 333 to 342 (PFTQGNSPEN) shows a compositional bias: polar residues. Over residues 540–561 (PDSVSSSYSSHSHRSPPGSARP) the composition is skewed to low complexity. Phosphoserine occurs at positions 581, 591, 609, 611, and 614. Positions 581 to 590 (SGSFFKQIDS) are enriched in polar residues. Residue T615 is modified to Phosphothreonine. A Phosphoserine modification is found at S617. 3 stretches are compositionally biased toward polar residues: residues 921–959 (SLPS…QTPQ), 972–997 (FVSS…PNSN), and 1029–1041 (PSPS…QQPL). Residues 1037–1905 (SQQPLPNHPR…QHVERQIQEG (869 aa)) form a required for localization to endoplasmic reticulum exit sites region. S1087 carries the phosphoserine modification. An interaction with MIA3 region spans residues 1118 to 1415 (ASPASVNTGQ…EAPHAPGSFH (298 aa)). A required for endoplasmic reticulum localization region spans residues 1119-1420 (SPASVNTGQL…PGSFHGDYAY (302 aa)). A compositionally biased stretch (low complexity) spans 1134–1150 (QASSASVTSTNSSQAAV). Position 1223 is a phosphoserine (S1223). The interval 1226-1253 (AENHRYSEPERPSSRASHYSDQLAPRQG) is disordered. The span at 1227–1238 (ENHRYSEPERPS) shows a compositional bias: basic and acidic residues. S1245 is modified (phosphoserine). T1340 carries the phosphothreonine modification. S1342, S1362, S1365, S1371, S1374, S1377, S1384, S1588, and S1616 each carry phosphoserine. Residues 1344–1395 (DDDAEIHRDPYGEEADRRSIHSEHSARSLRSTHSLPSRRSSLSSHSHQSQIY) form a disordered region. Residues 1348–1369 (EIHRDPYGEEADRRSIHSEHSA) show a composition bias toward basic and acidic residues. The span at 1371 to 1392 (SLRSTHSLPSRRSSLSSHSHQS) shows a compositional bias: low complexity. Residues 1449 to 1905 (QVPSRPTSPE…QHVERQIQEG (457 aa)) form a central conserved domain (CCD); mediates interaction with RNF183, LRRK2 and SEC13 region. The interval 1907-1943 (VLWSQDGTEPQQCRITSGSEVEQSDGPGLNQQAGPQA) is disordered. Residues 1908–1927 (LWSQDGTEPQQCRITSGSEV) are compositionally biased toward polar residues. T1922 bears the Phosphothreonine mark. A phosphoserine mark is found at S1951, S2043, S2063, S2077, and S2094. Disordered stretches follow at residues 1993 to 2141 (ELSP…RTEA), 2156 to 2198 (KKNQ…PTAS), and 2240 to 2357 (PLPI…AALN). Polar residues predominate over residues 2092–2105 (GSSSLTRAPSLTSD). Residues 2106–2126 (SEGKKPAQAVKKEPKEPKKTE) are compositionally biased toward basic and acidic residues. A required for interaction with SEC23A region spans residues 2126–2357 (ESWFSRWLPG…IGQRKYAALN (232 aa)). A Phosphoserine modification is found at S2291. The segment covering 2332-2343 (QLVQASVTSGNS) has biased composition (polar residues).

The protein belongs to the SEC16 family. As to quaternary structure, SEC16A and SEC16B are each present in multiple copies in a heteromeric complex. Interacts with SEC23A. Interacts with RNF183, RNF152, MIA3 and SEC13. Interacts with GORASP2 in response to ER stress. Interacts with LRRK2 (via ROC domain). Interacts with RAB10.

It localises to the endoplasmic reticulum membrane. The protein localises to the golgi apparatus membrane. The protein resides in the cytoplasm. Its subcellular location is the perinuclear region. It is found in the cytosol. It localises to the microsome membrane. Functionally, acts as a molecular scaffold that plays a key role in the organization of the endoplasmic reticulum exit sites (ERES), also known as transitional endoplasmic reticulum (tER). SAR1A-GTP-dependent assembly of SEC16A on the ER membrane forms an organized scaffold defining an ERES. Required for secretory cargo traffic from the endoplasmic reticulum to the Golgi apparatus. Mediates the recruitment of MIA3/TANGO to ERES. Regulates both conventional (ER/Golgi-dependent) and GORASP2-mediated unconventional (ER/Golgi-independent) trafficking of CFTR to cell membrane. Acts as a RAB10 effector in the regulation of insulin-induced SLC2A4/GLUT4 glucose transporter-enriched vesicles delivery to the plasma membrane in adipocytes. The sequence is that of Protein transport protein Sec16A (Sec16a) from Mus musculus (Mouse).